The chain runs to 54 residues: Large ribosomal subunit protein bL33 (54 aa).

Belongs to the bacterial ribosomal protein bL33 family.

The chain is Large ribosomal subunit protein bL33 from Chloroflexus aggregans (strain MD-66 / DSM 9485).